The sequence spans 291 residues: Energy-coupling factor transporter ATP-binding protein EcfA2 (291 aa).

The 244-residue stretch at Ile-3–Gly-246 folds into the ABC transporter domain. Residue Gly-40–Ser-47 participates in ATP binding.

The protein belongs to the ABC transporter superfamily. Energy-coupling factor EcfA family. In terms of assembly, forms a stable energy-coupling factor (ECF) transporter complex composed of 2 membrane-embedded substrate-binding proteins (S component), 2 ATP-binding proteins (A component) and 2 transmembrane proteins (T component).

The protein localises to the cell membrane. Its function is as follows. ATP-binding (A) component of a common energy-coupling factor (ECF) ABC-transporter complex. Unlike classic ABC transporters this ECF transporter provides the energy necessary to transport a number of different substrates. The sequence is that of Energy-coupling factor transporter ATP-binding protein EcfA2 from Latilactobacillus sakei subsp. sakei (strain 23K) (Lactobacillus sakei subsp. sakei).